The sequence spans 505 residues: Aminoaldehyde dehydrogenase 1a (505 aa).

Aspartate 101 contributes to the Na(+) binding site. NAD(+)-binding positions include 161–163 (TPW) and 187–190 (KPSE). Residue leucine 191 coordinates Na(+). NAD(+) is bound by residues 241–244 (SFET) and glutamate 262. The active-site Proton acceptor is glutamate 262. The active-site Nucleophile is the cysteine 296. Positions 395 and 461 each coordinate NAD(+).

This sequence belongs to the aldehyde dehydrogenase family. Forms homodimers.

It carries out the reaction 4-aminobutanal + NAD(+) + H2O = 4-aminobutanoate + NADH + 2 H(+). It catalyses the reaction 3-aminopropanal + NAD(+) + H2O = beta-alanine + NADH + 2 H(+). The enzyme catalyses 4-(trimethylamino)butanal + NAD(+) + H2O = 4-(trimethylamino)butanoate + NADH + 2 H(+). The catalysed reaction is 4-guanidinobutanal + NAD(+) + H2O = 4-guanidinobutanoate + NADH + 2 H(+). It carries out the reaction betaine aldehyde + NAD(+) + H2O = glycine betaine + NADH + 2 H(+). It functions in the pathway amine and polyamine biosynthesis; betaine biosynthesis via choline pathway; betaine from betaine aldehyde: step 1/1. Dehydrogenase that catalyzes the oxidation of several aminoaldehydes. Metabolizes and detoxifies aldehyde products of polyamine degradation to non-toxic amino acids. Catalyzes the oxidation of 4-aminobutanal and 3-aminopropanal to 4-aminobutanoate and beta-alanine, respectively. Catalyzes the oxidation of 4-(trimethylamino)butanal and 4-guanidinobutanal to 4-trimethylammoniobutanoate and 4-guanidinobutanoate, respectively. Catalyzes the oxidation of betaine aldehyde to glycine betaine. Functionally, dehydrogenase that catalyzes the oxidation of several aminoaldehydes. Catalyzes the oxidation of betaine aldehyde to glycine betaine. Catalyzes the oxidation of 4-(trimethylamino)butanal to 4-trimethylammoniobutanoate. The sequence is that of Aminoaldehyde dehydrogenase 1a from Zea mays (Maize).